Here is a 481-residue protein sequence, read N- to C-terminus: Glutamyl-tRNA(Gln) amidotransferase subunit A (481 aa).

Catalysis depends on charge relay system residues Lys78 and Ser153. The Acyl-ester intermediate role is filled by Ser177.

This sequence belongs to the amidase family. GatA subfamily. As to quaternary structure, heterotrimer of A, B and C subunits.

The enzyme catalyses L-glutamyl-tRNA(Gln) + L-glutamine + ATP + H2O = L-glutaminyl-tRNA(Gln) + L-glutamate + ADP + phosphate + H(+). Allows the formation of correctly charged Gln-tRNA(Gln) through the transamidation of misacylated Glu-tRNA(Gln) in organisms which lack glutaminyl-tRNA synthetase. The reaction takes place in the presence of glutamine and ATP through an activated gamma-phospho-Glu-tRNA(Gln). The chain is Glutamyl-tRNA(Gln) amidotransferase subunit A from Borrelia garinii subsp. bavariensis (strain ATCC BAA-2496 / DSM 23469 / PBi) (Borreliella bavariensis).